We begin with the raw amino-acid sequence, 255 residues long: Small ribosomal subunit protein eS1 (255 aa).

A2 is subject to N-acetylalanine; partial.

The protein belongs to the eukaryotic ribosomal protein eS1 family. In terms of assembly, component of the small ribosomal subunit. Mature ribosomes consist of a small (40S) and a large (60S) subunit. The 40S subunit contains about 33 different proteins and 1 molecule of RNA (18S). The 60S subunit contains about 49 different proteins and 3 molecules of RNA (25S, 5.8S and 5S).

The protein resides in the cytoplasm. The polypeptide is Small ribosomal subunit protein eS1 (Kluyveromyces lactis (strain ATCC 8585 / CBS 2359 / DSM 70799 / NBRC 1267 / NRRL Y-1140 / WM37) (Yeast)).